The primary structure comprises 264 residues: NAD-capped RNA hydrolase NudC (264 aa).

Arg70 provides a ligand contact to substrate. Zn(2+)-binding residues include Cys99 and Cys102. Glu112 lines the substrate pocket. 2 residues coordinate Zn(2+): Cys117 and Cys122. Tyr127 provides a ligand contact to substrate. The Nudix hydrolase domain occupies 128 to 257 (PVICPSIIVA…TIALKLINAT (130 aa)). Ala166, Glu182, and Glu186 together coordinate a divalent metal cation. The Nudix box signature appears at 167 to 188 (GFVEIGESFEQTVEREVFEETG). 200–207 (QPWAFPNS) contributes to the substrate binding site. Glu227 contacts a divalent metal cation. Ala250 is a binding site for substrate.

This sequence belongs to the Nudix hydrolase family. NudC subfamily. In terms of assembly, homodimer. The cofactor is Mg(2+). Requires Mn(2+) as cofactor. Zn(2+) serves as cofactor.

It catalyses the reaction a 5'-end NAD(+)-phospho-ribonucleoside in mRNA + H2O = a 5'-end phospho-adenosine-phospho-ribonucleoside in mRNA + beta-nicotinamide D-ribonucleotide + 2 H(+). It carries out the reaction NAD(+) + H2O = beta-nicotinamide D-ribonucleotide + AMP + 2 H(+). The enzyme catalyses NADH + H2O = reduced beta-nicotinamide D-ribonucleotide + AMP + 2 H(+). Functionally, mRNA decapping enzyme that specifically removes the nicotinamide adenine dinucleotide (NAD) cap from a subset of mRNAs by hydrolyzing the diphosphate linkage to produce nicotinamide mononucleotide (NMN) and 5' monophosphate mRNA. The NAD-cap is present at the 5'-end of some mRNAs and stabilizes RNA against 5'-processing. Has preference for mRNAs with a 5'-end purine. Catalyzes the hydrolysis of a broad range of dinucleotide pyrophosphates. This is NAD-capped RNA hydrolase NudC from Actinobacillus succinogenes (strain ATCC 55618 / DSM 22257 / CCUG 43843 / 130Z).